Reading from the N-terminus, the 515-residue chain is Cytochrome P450 76C3 (515 aa).

The helical transmembrane segment at 5-25 threads the bilayer; it reads LIQGMSLPLYFLLTLFFFFFA. Cys451 lines the heme pocket.

This sequence belongs to the cytochrome P450 family. The cofactor is heme.

The protein localises to the membrane. This chain is Cytochrome P450 76C3 (CYP76C3), found in Arabidopsis thaliana (Mouse-ear cress).